We begin with the raw amino-acid sequence, 147 residues long: Hordoindoline-B2 (147 aa).

The N-terminal stretch at 1–19 (MKTLFLLALLALVASTTSA) is a signal peptide. Residues 20-28 (QYSVGGGYN) constitute a propeptide that is removed on maturation.

In terms of processing, five disulfide bonds are present. Found in endosperm and aleurone layer of developing kernels, but not in the embryo.

Its subcellular location is the membrane. The protein resides in the secreted. The protein localises to the extracellular space. Acts as a membranotoxin, probably through its antibacterial and antifungal activities, contributing to the defense mechanism of the plant against predators. Forms monovalent cation-selective ion channels in membranes. Contributes to grain texture and hardness. The polypeptide is Hordoindoline-B2 (HINB-2) (Hordeum vulgare (Barley)).